A 266-amino-acid chain; its full sequence is Non-structural maintenance of chromosomes element 1 homolog (266 aa).

The tract at residues 1-102 (MQGSTRRAGA…SVSKMATDFA (102 aa)) is interaction with NSMCE3. Residues 191–232 (CNICHSLLIQGQSCETCGIRMHLPCVAKYFQSTAEPRCPHCN) form an RING-type; atypical zinc finger. Residues 246 to 266 (EKEREAGISKSSRKSLRTRQH) are disordered. Residues 256 to 266 (SSRKSLRTRQH) are compositionally biased toward basic residues.

Belongs to the NSE1 family. As to quaternary structure, component of the SMC5-SMC6 complex which consists at least of SMC5, SMC6, NSMCE2, NSMCE1, NSMCE4A or EID3 and NSMCE3. NSMCE1, NSMCE4A or EID3 and NSMCE3 probably form a subcomplex that bridges the head domains of the SMC5-SMC6 heterodimer. Interacts with NSMCE3. Post-translationally, ubiquitinated.

The protein localises to the nucleus. The protein resides in the chromosome. It is found in the telomere. The catalysed reaction is S-ubiquitinyl-[E2 ubiquitin-conjugating enzyme]-L-cysteine + [acceptor protein]-L-lysine = [E2 ubiquitin-conjugating enzyme]-L-cysteine + N(6)-ubiquitinyl-[acceptor protein]-L-lysine.. Functionally, RING-type zinc finger-containing E3 ubiquitin ligase that assembles with melanoma antigen protein (MAGE) to catalyze the direct transfer of ubiquitin from E2 ubiquitin-conjugating enzyme to a specific substrate. Within MAGE-RING ubiquitin ligase complex, MAGE stimulates and specifies ubiquitin ligase activity likely through recruitment and/or stabilization of the E2 ubiquitin-conjugating enzyme at the E3:substrate complex. Involved in maintenance of genome integrity, DNA damage response and DNA repair. NSMCE3/MAGEG1 and NSMCE1 ubiquitin ligase are components of SMC5-SMC6 complex and may positively regulate homologous recombination-mediated DNA repair. This chain is Non-structural maintenance of chromosomes element 1 homolog (Nsmce1), found in Rattus norvegicus (Rat).